The primary structure comprises 330 residues: Delta-aminolevulinic acid dehydratase (330 aa).

4 residues coordinate Zn(2+): Cys-122, Cys-124, His-131, and Cys-132. Lys-199 serves as the catalytic Schiff-base intermediate with substrate. At Lys-199 the chain carries N6-succinyllysine. 5-aminolevulinate is bound at residue Arg-209. Ser-215 carries the phosphoserine modification. A 5-aminolevulinate-binding site is contributed by Arg-221. Cys-223 contributes to the Zn(2+) binding site. Lys-252 (schiff-base intermediate with substrate) is an active-site residue. The residue at position 252 (Lys-252) is an N6-succinyllysine. Ser-279 lines the 5-aminolevulinate pocket.

Belongs to the ALAD family. In terms of assembly, homooctamer; active form. Homohexamer; low activity form. Zn(2+) is required as a cofactor.

It is found in the cytoplasm. It localises to the cytosol. It catalyses the reaction 2 5-aminolevulinate = porphobilinogen + 2 H2O + H(+). Its pathway is porphyrin-containing compound metabolism; protoporphyrin-IX biosynthesis; coproporphyrinogen-III from 5-aminolevulinate: step 1/4. With respect to regulation, can alternate between a fully active homooctamer and a low-activity homohexamer. A bound magnesium ion may promote the assembly of the fully active homooctamer. The magnesium-binding site is absent in the low-activity homohexamer. Inhibited by compounds that favor the hexameric state. Inhibited by divalent lead ions. The lead ions partially displace the zinc cofactor. In terms of biological role, catalyzes an early step in the biosynthesis of tetrapyrroles. Binds two molecules of 5-aminolevulinate per subunit, each at a distinct site, and catalyzes their condensation to form porphobilinogen. This Pongo abelii (Sumatran orangutan) protein is Delta-aminolevulinic acid dehydratase (ALAD).